Consider the following 359-residue polypeptide: ELAV-like protein 2 (359 aa).

A disordered region spans residues 1–33 (METQLSNGPTCNNTANGPTTINNNCSSPVDSGN). 2 RRM domains span residues 39-117 (TNLI…YARP) and 125-205 (ANLY…FANN). At S221 the chain carries Phosphoserine. An RRM 3 domain is found at 276–354 (WCIFVYNLAP…RVLQVSFKTN (79 aa)).

Belongs to the RRM elav family. Interacts with IGF2BP1. Interacts with MAP1B light chain LC1.

RNA-binding protein that binds to the 3' untranslated region (3'UTR) of target mRNAs. Seems to recognize a GAAA motif. Can bind to its own 3'UTR, the FOS 3'UTR and the ID 3'UTR. This Pongo abelii (Sumatran orangutan) protein is ELAV-like protein 2 (ELAVL2).